The following is a 175-amino-acid chain: MAQSQGWVKRYIKAFCKGFFVAVPVAVTFLDRVACVARVEGASMQPSLNPGGSQSSDVVLLNHWKVRNFEVHRGDIVSLVSPKNPEQKIIKRVIALEGDIVRTIGHKNRYVKVPRGHIWVEGDHHGHSFDSNSFGPVSLGLLHAHATHILWPPERWQKLESVLPPERLPVQREEE.

A helical membrane pass occupies residues 19–37 (FFVAVPVAVTFLDRVACVA). Active-site residues include serine 43 and lysine 91.

The protein belongs to the peptidase S26 family. IMP2 subfamily. In terms of assembly, heterodimer of 2 subunits, IMMPL1 and IMMPL2. In terms of tissue distribution, expressed in all tissues tested except adult liver and lung.

Its subcellular location is the mitochondrion inner membrane. Functionally, catalyzes the removal of transit peptides required for the targeting of proteins from the mitochondrial matrix, across the inner membrane, into the inter-membrane space. Known to process the nuclear encoded protein DIABLO. This Homo sapiens (Human) protein is Mitochondrial inner membrane protease subunit 2 (IMMP2L).